The following is a 359-amino-acid chain: Pyruvate dehydrogenase E1 component subunit beta, mitochondrial (359 aa).

Residues 1 to 30 constitute a mitochondrion transit peptide; sequence MAAVSGLVRRPLREVSGLLKRRFHWTAPAA. Y67 carries the phosphotyrosine modification. E89 contributes to the thiamine diphosphate binding site. K(+) contacts are provided by I142, A190, I191, D193, and N195. K354 carries the post-translational modification N6-acetyllysine.

As to quaternary structure, heterotetramer of two PDHA1 and two PDHB subunits. The heterotetramer interacts with DLAT, and is part of the multimeric pyruvate dehydrogenase complex that contains multiple copies of pyruvate dehydrogenase (E1), dihydrolipoamide acetyltransferase (DLAT, E2) and lipoamide dehydrogenase (DLD, E3). These subunits are bound to an inner core composed of about 48 DLAT and 12 PDHX molecules. Interacts with DLAT. Requires thiamine diphosphate as cofactor.

It is found in the mitochondrion matrix. The catalysed reaction is N(6)-[(R)-lipoyl]-L-lysyl-[protein] + pyruvate + H(+) = N(6)-[(R)-S(8)-acetyldihydrolipoyl]-L-lysyl-[protein] + CO2. In terms of biological role, the pyruvate dehydrogenase complex catalyzes the overall conversion of pyruvate to acetyl-CoA and CO(2), and thereby links the glycolytic pathway to the tricarboxylic cycle. This chain is Pyruvate dehydrogenase E1 component subunit beta, mitochondrial (PDHB), found in Homo sapiens (Human).